The primary structure comprises 297 residues: Ribosomal RNA small subunit methyltransferase A (297 aa).

Residues Asn-31, Leu-33, Gly-58, Glu-79, Asp-104, and Asn-129 each coordinate S-adenosyl-L-methionine.

It belongs to the class I-like SAM-binding methyltransferase superfamily. rRNA adenine N(6)-methyltransferase family. RsmA subfamily.

It localises to the cytoplasm. The enzyme catalyses adenosine(1518)/adenosine(1519) in 16S rRNA + 4 S-adenosyl-L-methionine = N(6)-dimethyladenosine(1518)/N(6)-dimethyladenosine(1519) in 16S rRNA + 4 S-adenosyl-L-homocysteine + 4 H(+). In terms of biological role, specifically dimethylates two adjacent adenosines (A1518 and A1519) in the loop of a conserved hairpin near the 3'-end of 16S rRNA in the 30S particle. May play a critical role in biogenesis of 30S subunits. The protein is Ribosomal RNA small subunit methyltransferase A of Staphylococcus aureus (strain Mu3 / ATCC 700698).